The primary structure comprises 516 residues: Golgin-84 (516 aa).

The Cytoplasmic portion of the chain corresponds to 1–492; the sequence is MSSWITGLAD…TFLRRYPMMR (492 aa). The interval 28 to 80 is disordered; that stretch reads QTENATGSADPMRRSMTSSTQSLSTSLKSTLSPVRRSGANSSSSVKSDGGVSV. Residues 42 to 80 show a composition bias toward low complexity; sequence SMTSSTQSLSTSLKSTLSPVRRSGANSSSSVKSDGGVSV. Residues S64 and S74 each carry the phosphoserine modification. A coiled-coil region spans residues 108 to 423; that stretch reads TNELAAFKIA…KAQTQLQQNM (316 aa). The helical; Anchor for type IV membrane protein transmembrane segment at 493-513 threads the bilayer; sequence VSVIVYVALLHLWVMFVLLST. At 514–516 the chain is on the lumenal side; sequence TPN.

The protein localises to the golgi apparatus membrane. Functionally, may be involved in maintaining Golgi structure and in intra-Golgi transport. The sequence is that of Golgin-84 (Golgin84) from Drosophila melanogaster (Fruit fly).